We begin with the raw amino-acid sequence, 557 residues long: Ribonuclease J 2 (557 aa).

Positions 76, 78, 144, and 166 each coordinate Zn(2+). A substrate-binding site is contributed by 366-370; the sequence is HASSH.

Belongs to the metallo-beta-lactamase superfamily. RNA-metabolizing metallo-beta-lactamase-like family. Bacterial RNase J subfamily. Homodimer, may be a subunit of the RNA degradosome. Zn(2+) is required as a cofactor.

It localises to the cytoplasm. Its function is as follows. An RNase that has 5'-3' exonuclease and possibly endoonuclease activity. Involved in maturation of rRNA and in some organisms also mRNA maturation and/or decay. This chain is Ribonuclease J 2, found in Staphylococcus aureus (strain MRSA252).